The chain runs to 193 residues: DNA damage-inducible transcript 4-like protein (193 aa).

The protein belongs to the DDIT4 family.

Its subcellular location is the cytoplasm. In terms of biological role, inhibits cell growth by regulating the TOR signaling pathway upstream of the TSC1-TSC2 complex and downstream of AKT1. This Bos taurus (Bovine) protein is DNA damage-inducible transcript 4-like protein (DDIT4L).